A 715-amino-acid chain; its full sequence is Fatty acid oxidation complex subunit alpha (715 aa).

The tract at residues 1–190 (MTTTSAFMLN…KAGLVDDVVP (190 aa)) is enoyl-CoA hydratase. The 3-hydroxyacyl-CoA dehydrogenase stretch occupies residues 306–715 (GPLNSVGILG…WTNGETDQGN (410 aa)).

The protein in the N-terminal section; belongs to the enoyl-CoA hydratase/isomerase family. It in the central section; belongs to the 3-hydroxyacyl-CoA dehydrogenase family. In terms of assembly, heterotetramer of two alpha chains (FadJ) and two beta chains (FadI).

It localises to the cytoplasm. The enzyme catalyses a (3S)-3-hydroxyacyl-CoA = a (2E)-enoyl-CoA + H2O. The catalysed reaction is a 4-saturated-(3S)-3-hydroxyacyl-CoA = a (3E)-enoyl-CoA + H2O. It catalyses the reaction a (3S)-3-hydroxyacyl-CoA + NAD(+) = a 3-oxoacyl-CoA + NADH + H(+). It carries out the reaction (3S)-3-hydroxybutanoyl-CoA = (3R)-3-hydroxybutanoyl-CoA. The protein operates within lipid metabolism; fatty acid beta-oxidation. In terms of biological role, catalyzes the formation of a hydroxyacyl-CoA by addition of water on enoyl-CoA. Also exhibits 3-hydroxyacyl-CoA epimerase and 3-hydroxyacyl-CoA dehydrogenase activities. This is Fatty acid oxidation complex subunit alpha from Salmonella paratyphi B (strain ATCC BAA-1250 / SPB7).